The sequence spans 186 residues: Ribosome-recycling factor (186 aa).

Belongs to the RRF family.

The protein resides in the cytoplasm. In terms of biological role, responsible for the release of ribosomes from messenger RNA at the termination of protein biosynthesis. May increase the efficiency of translation by recycling ribosomes from one round of translation to another. The sequence is that of Ribosome-recycling factor from Bacteroides thetaiotaomicron (strain ATCC 29148 / DSM 2079 / JCM 5827 / CCUG 10774 / NCTC 10582 / VPI-5482 / E50).